The sequence spans 302 residues: MQDVVTPAGGVWVHWRDYLTLTKPRVVVLMVFTAIVGMFLASPGQVPWVALTVGSLGIALAAGSAAALNHLADQRIDAIMARTRRRPLPSGHLRPLQVLGFSSLLGVAGLGMLALWINPLTAALTFASLIGYALVYTLYLKRATPQNIVIGGAAGAAPPLLGWTAVTGSVDAHALLLFLIVFVWTPPHFWALAVARLKDYERADVPMLPVVYGERFTRWQILLYTVLLLAVSLLPWATFMGGWLYLAAAVGLGGWYLMLNVRLLLTPGPRLPMRSFRFSIIYLFGLFAALLVDRQLPVWLGA.

9 helical membrane passes run 26–46, 48–68, 98–118, 120–140, 148–168, 174–194, 221–241, 244–264, and 280–300; these read VVVLMVFTAIVGMFLASPGQV, WVALTVGSLGIALAAGSAAAL, VLGFSSLLGVAGLGMLALWIN, LTAALTFASLIGYALVYTLYL, IVIGGAAGAAPPLLGWTAVTG, ALLLFLIVFVWTPPHFWALAV, ILLYTVLLLAVSLLPWATFMG, LYLAAAVGLGGWYLMLNVRLL, and IIYLFGLFAALLVDRQLPVWL.

The protein belongs to the UbiA prenyltransferase family. Protoheme IX farnesyltransferase subfamily.

The protein localises to the cell inner membrane. It catalyses the reaction heme b + (2E,6E)-farnesyl diphosphate + H2O = Fe(II)-heme o + diphosphate. The protein operates within porphyrin-containing compound metabolism; heme O biosynthesis; heme O from protoheme: step 1/1. In terms of biological role, converts heme B (protoheme IX) to heme O by substitution of the vinyl group on carbon 2 of heme B porphyrin ring with a hydroxyethyl farnesyl side group. The polypeptide is Protoheme IX farnesyltransferase (Alkalilimnicola ehrlichii (strain ATCC BAA-1101 / DSM 17681 / MLHE-1)).